A 706-amino-acid polypeptide reads, in one-letter code: Integrator complex subunit 13 (706 aa).

Positions 564-603 are disordered; sequence PPEEEERKKRGRKREDKEDKSEKAVKDYEQEKSWQDSERL. A coiled-coil region spans residues 567-622; the sequence is EEERKKRGRKREDKEDKSEKAVKDYEQEKSWQDSERLKGILERGKEELAEAEIIKD. A Nuclear localization signal (NLS) motif is present at residues 572–582; it reads KRGRKREDKED. Residue Lys-611 forms a Glycyl lysine isopeptide (Lys-Gly) (interchain with G-Cter in SUMO2) linkage. A compositionally biased stretch (basic and acidic residues) spans 615–636; that stretch reads AEAEIIKDSPDSPEPPNKKPLV. The interval 615–650 is disordered; the sequence is AEAEIIKDSPDSPEPPNKKPLVEMDETPQVEKSKGP. 3 positions are modified to phosphoserine: Ser-623, Ser-626, and Ser-678. Positions 649-694 are cleavage module binding motif (CMBM); sequence GPVSLLSLWSNRINTANSRKHQEFAGRLNSVNNRAELYQHLKEENG.

This sequence belongs to the Integrator subunit 13 family. Component of the Integrator complex, composed of core subunits INTS1, INTS2, INTS3, INTS4, INTS5, INTS6, INTS7, INTS8, INTS9/RC74, INTS10, INTS11/CPSF3L, INTS12, INTS13, INTS14 and INTS15. The core complex associates with protein phosphatase 2A subunits PPP2CA and PPP2R1A, to form the Integrator-PP2A (INTAC) complex. INTS13 is part of the tail subcomplex, composed of INTS10, INTS13, INTS14 and INTS15. Interacts with transcription factors ZNF609 and ZNF655. Interacts with PAFAH1B1; this interaction may be required for proper recruitment of dynein complexes to the nuclear envelope at prophase. Widely expressed. Tends to be up-regulated in seminomas compared to normal testis.

The protein localises to the nucleus. It is found in the cytoplasm. Functionally, component of the integrator complex, a multiprotein complex that terminates RNA polymerase II (Pol II) transcription in the promoter-proximal region of genes. The integrator complex provides a quality checkpoint during transcription elongation by driving premature transcription termination of transcripts that are unfavorably configured for transcriptional elongation: the complex terminates transcription by (1) catalyzing dephosphorylation of the C-terminal domain (CTD) of Pol II subunit POLR2A/RPB1 and SUPT5H/SPT5, (2) degrading the exiting nascent RNA transcript via endonuclease activity and (3) promoting the release of Pol II from bound DNA. The integrator complex is also involved in terminating the synthesis of non-coding Pol II transcripts, such as enhancer RNAs (eRNAs), small nuclear RNAs (snRNAs), telomerase RNAs and long non-coding RNAs (lncRNAs). Within the integrator complex, INTS13 is part of the integrator tail module and acts as a platform for the recruitment of transcription factors at promoters. At prophase, mediates recruitment of cytoplasmic dynein to the nuclear envelope, a step important for proper centrosome-nucleus coupling. At G2/M phase, may be required for proper spindle formation and execution of cytokinesis. The protein is Integrator complex subunit 13 of Homo sapiens (Human).